Consider the following 713-residue polypeptide: Cyclomaltodextrin glucanotransferase (713 aa).

The signal sequence occupies residues 1–27 (MKRFMKLTAVWTLWLSLTLGLLSPVHA). Positions 28-165 (APDTSVSNKQ…NIKVIIDFAP (138 aa)) are A1. Ca(2+) is bound by residues D54, N56, N59, and N60. C70 and C77 are joined by a disulfide. Residues G78 and D80 each contribute to the Ca(2+) site. Position 127-128 (127-128 (YW)) interacts with substrate. N166 is a binding site for Ca(2+). The tract at residues 166 to 229 (NHTSPASSDD…NLYDLADLNH (64 aa)) is b. H167 is a binding site for substrate. Residue I217 coordinates Ca(2+). A substrate-binding site is contributed by 220–223 (NLYD). A Ca(2+)-binding site is contributed by D226. The interval 230-433 (NNSSVDVYLK…LRKSNPAIAY (204 aa)) is A2. R254 is a substrate binding site. The Nucleophile role is filled by D256. 259-260 (KH) is a binding site for substrate. H260 is a Ca(2+) binding site. E284 functions as the Proton donor in the catalytic mechanism. Residues H354, D398, and R402 each coordinate substrate. The interval 434–522 (GSTHERWINN…GTAVWQYTTD (89 aa)) is c. Residues 523-609 (ATTPIIGNVG…SNIYDNFEVL (87 aa)) form a d region. The IPT/TIG domain maps to 526 to 607 (PIIGNVGPMM…AASNIYDNFE (82 aa)). One can recognise a CBM20 domain in the interval 608 to 713 (VLTGDQVTVR…TATVNVNWQP (106 aa)). Residues 610 to 713 (TGDQVTVRFV…TATVNVNWQP (104 aa)) are e.

Belongs to the glycosyl hydrolase 13 family. Monomer. Requires Ca(2+) as cofactor.

It is found in the secreted. The catalysed reaction is Cyclizes part of a (1-&gt;4)-alpha-D-glucan chain by formation of a (1-&gt;4)-alpha-D-glucosidic bond.. In Bacillus sp. (strain 1011), this protein is Cyclomaltodextrin glucanotransferase (cgt).